Consider the following 237-residue polypeptide: Phosphoadenosine 5'-phosphosulfate reductase (237 aa).

The active-site Nucleophile; cysteine thiosulfonate intermediate is the C231.

Belongs to the PAPS reductase family. CysH subfamily.

Its subcellular location is the cytoplasm. It catalyses the reaction [thioredoxin]-disulfide + sulfite + adenosine 3',5'-bisphosphate + 2 H(+) = [thioredoxin]-dithiol + 3'-phosphoadenylyl sulfate. Its pathway is sulfur metabolism; hydrogen sulfide biosynthesis; sulfite from sulfate: step 3/3. Its function is as follows. Catalyzes the formation of sulfite from phosphoadenosine 5'-phosphosulfate (PAPS) using thioredoxin as an electron donor. This Xylella fastidiosa (strain M12) protein is Phosphoadenosine 5'-phosphosulfate reductase.